A 150-amino-acid polypeptide reads, in one-letter code: UPF0506 protein SJCHGC02381 (150 aa).

The signal sequence occupies residues 1 to 18 (MNTCIQLLILCLVTVINS). 8 N-linked (GlcNAc...) asparagine glycosylation sites follow: Asn-20, Asn-24, Asn-32, Asn-36, Asn-48, Asn-52, Asn-64, and Asn-110. The segment at 22–49 (TDNSTENTIKNETENATETELPETFENE) is disordered. The segment covering 36 to 49 (NATETELPETFENE) has biased composition (acidic residues). 3 cysteine pairs are disulfide-bonded: Cys-116-Cys-130, Cys-123-Cys-134, and Cys-129-Cys-139.

It belongs to the UPF0506 family.

Its subcellular location is the secreted. The protein is UPF0506 protein SJCHGC02381 of Schistosoma japonicum (Blood fluke).